The following is a 469-amino-acid chain: MIKRLPDDFIFGGATAAYQAEGATTIDGKGAVAWDRYLKDNYWYTAEPASDFYHQYPIDLALAEQFGINGIRISIAWSRIFPEGFGEVNAKGVAFYHSLFAECHKHHVEPFVTLHHFDTPEALHSRGDFLNRENIDHFVAYAAYCFKEFPEVSYWTTFNEIGPIGDGQYLVGKFPPGISYDLAKVFQSHHNMMLAHARALVHYKEQAYPGEIGIVHALPTKYPLDPTNPADVLAAELDDIIHNKFILDATYLGQYSEKTMAGVKHILAENGGSLDLRPEDFELLQAAKDLNDFLGINYYMSDWLRAFDGETEIIHNGKGEKGGSKYQIKGVGQRIFDVDVPRTDWDWMIYPQGLYDQIMRIKADYPGYKKIYITENGLGYKDTCIDGRIDDDARIDYIKQHLAVIADVISAGANVKGYFIWSLMDVFSWSNGYDKRYGLFYVDFETQKRYPKKSAYWYQQLAATKTISV.

The D-galactose 6-phosphate site is built by glutamine 19, histidine 116, asparagine 159, glutamate 160, and asparagine 297. Residue glutamate 160 is the Proton donor of the active site. The Nucleophile role is filled by glutamate 375. Positions 428, 429, 435, and 437 each coordinate D-galactose 6-phosphate.

This sequence belongs to the glycosyl hydrolase 1 family.

It carries out the reaction a 6-phospho-beta-D-galactoside + H2O = D-galactose 6-phosphate + an alcohol. It functions in the pathway carbohydrate metabolism; lactose degradation; D-galactose 6-phosphate and beta-D-glucose from lactose 6-phosphate: step 1/1. The polypeptide is 6-phospho-beta-galactosidase (Streptococcus equi subsp. zooepidemicus (strain MGCS10565)).